Consider the following 210-residue polypeptide: Probable GTP-binding protein EngB (210 aa).

Positions 25 to 199 constitute an EngB-type G domain; the sequence is CGIEVAFAGR…RQKLDSWFSE (175 aa). Residues 33-40, 60-64, 78-81, 145-148, and 178-180 contribute to the GTP site; these read GRSNAGKS, GRTQL, DLPG, TKAD, and FSS. Mg(2+)-binding residues include serine 40 and threonine 62.

Belongs to the TRAFAC class TrmE-Era-EngA-EngB-Septin-like GTPase superfamily. EngB GTPase family. The cofactor is Mg(2+).

Its function is as follows. Necessary for normal cell division and for the maintenance of normal septation. This Salmonella paratyphi C (strain RKS4594) protein is Probable GTP-binding protein EngB.